A 273-amino-acid polypeptide reads, in one-letter code: Putative ankyrin repeat protein RBE_0317 (273 aa).

5 ANK repeats span residues 31–60 (LGKE…DFYS), 93–123 (NGNT…EVNT), 127–157 (GGNS…NVNE), 161–191 (YGDT…DVNE), and 195–225 (QGET…DTKQ).

The chain is Putative ankyrin repeat protein RBE_0317 from Rickettsia bellii (strain RML369-C).